Here is a 1342-residue protein sequence, read N- to C-terminus: DNA-directed RNA polymerase subunit beta (1342 aa).

It belongs to the RNA polymerase beta chain family. The RNAP catalytic core consists of 2 alpha, 1 beta, 1 beta' and 1 omega subunit. When a sigma factor is associated with the core the holoenzyme is formed, which can initiate transcription.

It carries out the reaction RNA(n) + a ribonucleoside 5'-triphosphate = RNA(n+1) + diphosphate. Functionally, DNA-dependent RNA polymerase catalyzes the transcription of DNA into RNA using the four ribonucleoside triphosphates as substrates. This Vibrio vulnificus (strain CMCP6) protein is DNA-directed RNA polymerase subunit beta.